We begin with the raw amino-acid sequence, 288 residues long: Pantothenate synthetase (288 aa).

31–38 (MGNLHRGH) serves as a coordination point for ATP. His38 acts as the Proton donor in catalysis. Gln62 provides a ligand contact to (R)-pantoate. Gln62 serves as a coordination point for beta-alanine. Residue 150–153 (GQKD) coordinates ATP. Residue Gln156 coordinates (R)-pantoate. ATP-binding positions include Ile179 and 187 to 190 (LSSR).

Belongs to the pantothenate synthetase family. In terms of assembly, homodimer.

It localises to the cytoplasm. The catalysed reaction is (R)-pantoate + beta-alanine + ATP = (R)-pantothenate + AMP + diphosphate + H(+). It participates in cofactor biosynthesis; (R)-pantothenate biosynthesis; (R)-pantothenate from (R)-pantoate and beta-alanine: step 1/1. Its function is as follows. Catalyzes the condensation of pantoate with beta-alanine in an ATP-dependent reaction via a pantoyl-adenylate intermediate. This is Pantothenate synthetase from Wigglesworthia glossinidia brevipalpis.